Here is a 449-residue protein sequence, read N- to C-terminus: Tubulin beta-2 chain (449 aa).

Residues glutamine 11 and glutamate 69 each coordinate GTP. Glutamate 69 contributes to the Mg(2+) binding site. A Methylhistidine modification is found at histidine 137. 6 residues coordinate GTP: serine 138, glycine 142, threonine 143, glycine 144, asparagine 204, and asparagine 226.

Belongs to the tubulin family. In terms of assembly, dimer of alpha and beta chains. A typical microtubule is a hollow water-filled tube with an outer diameter of 25 nm and an inner diameter of 15 nM. Alpha-beta heterodimers associate head-to-tail to form protofilaments running lengthwise along the microtubule wall with the beta-tubulin subunit facing the microtubule plus end conferring a structural polarity. Microtubules usually have 13 protofilaments but different protofilament numbers can be found in some organisms and specialized cells. Mg(2+) is required as a cofactor.

It localises to the cytoplasm. Its subcellular location is the cytoskeleton. Its function is as follows. Tubulin is the major constituent of microtubules, a cylinder consisting of laterally associated linear protofilaments composed of alpha- and beta-tubulin heterodimers. Microtubules grow by the addition of GTP-tubulin dimers to the microtubule end, where a stabilizing cap forms. Below the cap, tubulin dimers are in GDP-bound state, owing to GTPase activity of alpha-tubulin. The sequence is that of Tubulin beta-2 chain (tubC) from Emericella nidulans (strain FGSC A4 / ATCC 38163 / CBS 112.46 / NRRL 194 / M139) (Aspergillus nidulans).